The chain runs to 206 residues: Large ribosomal subunit protein uL4 (206 aa).

The disordered stretch occupies residues 63-94; sequence MYKQKGTGRARHHSARAPQFRGGGKAHGPVVR. A compositionally biased stretch (basic residues) spans 64 to 77; that stretch reads YKQKGTGRARHHSA.

It belongs to the universal ribosomal protein uL4 family. In terms of assembly, part of the 50S ribosomal subunit.

One of the primary rRNA binding proteins, this protein initially binds near the 5'-end of the 23S rRNA. It is important during the early stages of 50S assembly. It makes multiple contacts with different domains of the 23S rRNA in the assembled 50S subunit and ribosome. In terms of biological role, forms part of the polypeptide exit tunnel. This chain is Large ribosomal subunit protein uL4, found in Mesorhizobium japonicum (strain LMG 29417 / CECT 9101 / MAFF 303099) (Mesorhizobium loti (strain MAFF 303099)).